The primary structure comprises 774 residues: Lon protease 1 (774 aa).

In terms of domain architecture, Lon N-terminal spans 9–202; the sequence is IPLLPLRGLL…KVIDFINNEK (194 aa). 354-361 provides a ligand contact to ATP; the sequence is GPPGVGKT. The Lon proteolytic domain occupies 590-771; that stretch reads EDQVGVVTGL…DEVLEHALVG (182 aa). Active-site residues include S677 and K720.

Belongs to the peptidase S16 family. Homohexamer. Organized in a ring with a central cavity. Exists as a mixture of small oligomeric species in solution.

The protein resides in the cytoplasm. It carries out the reaction Hydrolysis of proteins in presence of ATP.. In terms of biological role, ATP-dependent serine protease that mediates the selective degradation of mutant and abnormal proteins as well as certain short-lived regulatory proteins. Required for cellular homeostasis and for survival from DNA damage and developmental changes induced by stress. Degrades polypeptides processively to yield small peptide fragments that are 5 to 10 amino acids long. Binds to DNA in a double-stranded, site-specific manner. Has been implicated in preventing sigma(G) activity under non-sporulation conditions. The protein is Lon protease 1 of Bacillus subtilis (strain 168).